The following is a 153-amino-acid chain: Probable disulfide formation protein (153 aa).

Residues 4 to 23 (DTRLYLAWLVALAATLGSLY) form a helical membrane-spanning segment. Cysteines 33 and 36 form a disulfide. The next 2 membrane-spanning stretches (helical) occupy residues 38–57 (AQRIFMYPLAVILGIAAFVG) and 64–81 (YVLPLAALGLGFAIFQNL). Cys-93 and Cys-101 are joined by a disulfide. A helical membrane pass occupies residues 117-139 (RALTIPVLSMIAFALILALLSWP).

It belongs to the DsbB family. BdbC subfamily.

The protein resides in the cell membrane. Functionally, required for disulfide bond formation in some proteins. The sequence is that of Probable disulfide formation protein from Deinococcus radiodurans (strain ATCC 13939 / DSM 20539 / JCM 16871 / CCUG 27074 / LMG 4051 / NBRC 15346 / NCIMB 9279 / VKM B-1422 / R1).